Reading from the N-terminus, the 436-residue chain is GTPase Der (436 aa).

2 consecutive EngA-type G domains span residues 4–167 (PVVA…PEVE) and 174–350 (VRVA…EQRT). GTP contacts are provided by residues 10–17 (GRPNVGKS), 57–61 (DTGGL), 120–123 (NKVD), 180–187 (GRPNVGKS), 227–231 (DTAGL), and 292–295 (NKWD). The KH-like domain occupies 351-435 (RRISTSEVND…PLRIILRRKN (85 aa)).

Belongs to the TRAFAC class TrmE-Era-EngA-EngB-Septin-like GTPase superfamily. EngA (Der) GTPase family. Associates with the 50S ribosomal subunit.

In terms of biological role, GTPase that plays an essential role in the late steps of ribosome biogenesis. This is GTPase Der from Gemmatimonas aurantiaca (strain DSM 14586 / JCM 11422 / NBRC 100505 / T-27).